Consider the following 690-residue polypeptide: eEF1A lysine and N-terminal methyltransferase (690 aa).

Residues 427 to 451 are disordered; it reads AAASSASKKKNKKKAKQPASTGAKD. A compositionally biased stretch (basic residues) spans 433–442; that stretch reads SKKKNKKKAK.

The protein belongs to the methyltransferase superfamily.

The catalysed reaction is L-lysyl-[protein] + S-adenosyl-L-methionine = N(6)-methyl-L-lysyl-[protein] + S-adenosyl-L-homocysteine + H(+). The enzyme catalyses N(6)-methyl-L-lysyl-[protein] + S-adenosyl-L-methionine = N(6),N(6)-dimethyl-L-lysyl-[protein] + S-adenosyl-L-homocysteine + H(+). It carries out the reaction N-terminal glycyl-L-lysyl-L-glutamyl-[protein] + 3 S-adenosyl-L-methionine = N-terminal N,N,N-trimethyl-glycyl-L-lysyl-L-glutamyl-[protein] + 3 S-adenosyl-L-homocysteine + 3 H(+). In terms of biological role, dual methyltransferase that catalyzes methylation of elongation factor 1-alpha (eef1a1 and eef1a2) at two different positions, and is therefore involved in the regulation of mRNA translation. Via its C-terminus, methylates the N-terminus of eef1a1 and eef1a2. Via its N-terminus dimethylates lysine residues of eef1a1 and eef1a2. This Danio rerio (Zebrafish) protein is eEF1A lysine and N-terminal methyltransferase (mettl13).